Here is a 434-residue protein sequence, read N- to C-terminus: 3-phosphoshikimate 1-carboxyvinyltransferase (434 aa).

Positions 22, 23, and 27 each coordinate 3-phosphoshikimate. Residue lysine 22 participates in phosphoenolpyruvate binding. Phosphoenolpyruvate is bound by residues glycine 94 and arginine 122. Residues serine 169, serine 170, glutamine 171, serine 199, aspartate 320, and lysine 347 each contribute to the 3-phosphoshikimate site. Phosphoenolpyruvate is bound at residue glutamine 171. Aspartate 320 serves as the catalytic Proton acceptor. Arginine 351, arginine 395, and lysine 420 together coordinate phosphoenolpyruvate.

Belongs to the EPSP synthase family. As to quaternary structure, monomer.

The protein localises to the cytoplasm. The catalysed reaction is 3-phosphoshikimate + phosphoenolpyruvate = 5-O-(1-carboxyvinyl)-3-phosphoshikimate + phosphate. The protein operates within metabolic intermediate biosynthesis; chorismate biosynthesis; chorismate from D-erythrose 4-phosphate and phosphoenolpyruvate: step 6/7. Its function is as follows. Catalyzes the transfer of the enolpyruvyl moiety of phosphoenolpyruvate (PEP) to the 5-hydroxyl of shikimate-3-phosphate (S3P) to produce enolpyruvyl shikimate-3-phosphate and inorganic phosphate. This chain is 3-phosphoshikimate 1-carboxyvinyltransferase, found in Ralstonia pickettii (strain 12J).